Consider the following 770-residue polypeptide: Penicillin-binding protein 1C (770 aa).

At 1-8 (MPRLLTKR) the chain is on the cytoplasmic side. The chain crosses the membrane as a helical; Signal-anchor for type II membrane protein span at residues 9–29 (GCWITLAAAPFLLFLAAWGAD). The Periplasmic portion of the chain corresponds to 30–770 (KLWPLPLHEV…QIATVKFVMQ (741 aa)). Residues 43-213 (RVVVAQDGTP…SRLRPDRWPE (171 aa)) are transglycosylase. Residue E84 is the Proton donor; for transglycosylase activity of the active site. The segment at 278-559 (AGLQRRLEEL…FASAVPLLNQ (282 aa)) is transpeptidase. Catalysis depends on S342, which acts as the Acyl-ester intermediate; for transpeptidase activity.

This sequence in the N-terminal section; belongs to the glycosyltransferase 51 family. It in the C-terminal section; belongs to the transpeptidase family.

It is found in the cell inner membrane. It catalyses the reaction [GlcNAc-(1-&gt;4)-Mur2Ac(oyl-L-Ala-gamma-D-Glu-L-Lys-D-Ala-D-Ala)](n)-di-trans,octa-cis-undecaprenyl diphosphate + beta-D-GlcNAc-(1-&gt;4)-Mur2Ac(oyl-L-Ala-gamma-D-Glu-L-Lys-D-Ala-D-Ala)-di-trans,octa-cis-undecaprenyl diphosphate = [GlcNAc-(1-&gt;4)-Mur2Ac(oyl-L-Ala-gamma-D-Glu-L-Lys-D-Ala-D-Ala)](n+1)-di-trans,octa-cis-undecaprenyl diphosphate + di-trans,octa-cis-undecaprenyl diphosphate + H(+). It functions in the pathway cell wall biogenesis; peptidoglycan biosynthesis. Transglycosylase activity can be inhibited by moenomycin. In terms of biological role, cell wall formation. The enzyme has a penicillin-insensitive transglycosylase N-terminal domain (formation of linear glycan strands) and a transpeptidase C-terminal domain which may not be functional. The chain is Penicillin-binding protein 1C (pbpC) from Escherichia coli (strain K12).